A 295-amino-acid polypeptide reads, in one-letter code: Cytidine deaminase (295 aa).

CMP/dCMP-type deaminase domains follow at residues 48–168 and 187–295; these read EDAD…FGPA and DDDE…YLSL. Position 89 to 91 (89 to 91) interacts with substrate; that stretch reads NME. Histidine 102 is a Zn(2+) binding site. Glutamate 104 functions as the Proton donor in the catalytic mechanism. Residues cysteine 129 and cysteine 132 each contribute to the Zn(2+) site.

Belongs to the cytidine and deoxycytidylate deaminase family. In terms of assembly, homodimer. Zn(2+) is required as a cofactor.

It carries out the reaction cytidine + H2O + H(+) = uridine + NH4(+). The catalysed reaction is 2'-deoxycytidine + H2O + H(+) = 2'-deoxyuridine + NH4(+). This enzyme scavenges exogenous and endogenous cytidine and 2'-deoxycytidine for UMP synthesis. The protein is Cytidine deaminase of Vibrio cholerae serotype O1 (strain ATCC 39315 / El Tor Inaba N16961).